Reading from the N-terminus, the 129-residue chain is Large ribosomal subunit protein bL12 (129 aa).

It belongs to the bacterial ribosomal protein bL12 family. As to quaternary structure, homodimer. Part of the ribosomal stalk of the 50S ribosomal subunit. Forms a multimeric L10(L12)X complex, where L10 forms an elongated spine to which 2 to 4 L12 dimers bind in a sequential fashion. Binds GTP-bound translation factors.

In terms of biological role, forms part of the ribosomal stalk which helps the ribosome interact with GTP-bound translation factors. Is thus essential for accurate translation. This Protochlamydia amoebophila (strain UWE25) protein is Large ribosomal subunit protein bL12.